A 208-amino-acid chain; its full sequence is Large ribosomal subunit protein uL4 (208 aa).

The tract at residues 44–79 (QRQGTHKSKERSEISGSTRKIGRQKGGGGARRGDMN) is disordered.

The protein belongs to the universal ribosomal protein uL4 family. Part of the 50S ribosomal subunit.

Its function is as follows. One of the primary rRNA binding proteins, this protein initially binds near the 5'-end of the 23S rRNA. It is important during the early stages of 50S assembly. It makes multiple contacts with different domains of the 23S rRNA in the assembled 50S subunit and ribosome. Forms part of the polypeptide exit tunnel. The protein is Large ribosomal subunit protein uL4 of Bacteroides thetaiotaomicron (strain ATCC 29148 / DSM 2079 / JCM 5827 / CCUG 10774 / NCTC 10582 / VPI-5482 / E50).